A 1459-amino-acid chain; its full sequence is DNA-binding protein RFX7 (1459 aa).

A disordered region spans residues 1-27; sequence MAEEQQQPPPQQLDAPQQLPLSAPNPG. Over residues 12–21 the composition is skewed to low complexity; it reads QLDAPQQLPL. The RFX-type winged-helix DNA-binding region spans 108–183; the sequence is AFSWIRNTLE…YCYSGLRKKA (76 aa). A PxLPxI/L motif; mediates interaction with ANKRA2 and RFXANK motif is present at residues 188–193; it reads PTLPNL. 6 disordered regions span residues 303 to 347, 404 to 428, 482 to 590, 634 to 659, 688 to 716, and 918 to 1016; these read AKQQ…LPNG, SVKQ…ARHR, PSNS…GVTE, FTST…SPRK, GQKP…AQIP, and SVTP…VPPS. Composition is skewed to polar residues over residues 404-416 and 482-502; these read SVKQ…QNVP and PSNS…TGTT. Residues 521-534 show a composition bias toward low complexity; it reads SPGSRASSTGGTSA. The segment covering 537–549 has biased composition (basic and acidic residues); the sequence is VKMEPEGSSDEHP. Polar residues-rich tracts occupy residues 562-578, 634-645, and 706-716; these read PLTT…NTDG, FTSTSSPSNGDS, and TESSTAGAQIP. Over residues 947-963 the composition is skewed to pro residues; that stretch reads TPTPTPTPTPTPTPTPT. A compositionally biased stretch (polar residues) spans 971–1009; sequence GSQSLSRESPCSRLAQTTPVDSALGSSRHTPIGTPHSNC.

It belongs to the RFX family. Interacts (via PxLPxI/L motif) with RFXANK (via ankyrin repeats). Interacts (via PxLPxI/L motif) with ANKRA2 (via ankyrin repeats). As to expression, expressed in spleen and lymph node and to a lower extend in brain (at protein level). Expressed in lymphoid organs and lymphoid cell subsets. Expressed throughout natural killer (NK) cell maturation.

The protein resides in the nucleus. Functionally, transcription factor. Acts as a transcriptional activator by binding to promoter regions of target genes, such as Rec8, Mxd4 and Ddit4. Plays a role in natural killer (NK) cell maintenance and immunity. May play a role in the process of ciliogenesis in the neural tube and neural tube closure. The polypeptide is DNA-binding protein RFX7 (Mus musculus (Mouse)).